We begin with the raw amino-acid sequence, 188 residues long: Large ribosomal subunit protein eL18 (188 aa).

Positions 147 to 188 (EAEKHFGPAPGVPHSHTKPYVRSKGRKFERARGRRASRAYKN) are disordered. 2 stretches are compositionally biased toward basic residues: residues 161–171 (SHTKPYVRSKG) and 178–188 (RGRRASRAYKN).

The protein belongs to the eukaryotic ribosomal protein eL18 family.

It localises to the cytoplasm. This is Large ribosomal subunit protein eL18 (rpl-18) from Caenorhabditis elegans.